We begin with the raw amino-acid sequence, 450 residues long: Folate synthesis bifunctional protein (450 aa).

Residues 1–166 (MTSWNFVCLS…TFAELAAIYP (166 aa)) are HPPK. Positions 180-441 (TQIMGIVNIT…QVEGNRRALA (262 aa)) constitute a Pterin-binding domain. The DHPS stretch occupies residues 182-450 (IMGIVNITDN…AAAAWAGMFV (269 aa)). Mg(2+) is bound at residue Asn187. (7,8-dihydropterin-6-yl)methyl diphosphate-binding positions include Thr227, Asp267, Asn287, Asp358, Lys395, and 429–431 (RVH).

The protein in the C-terminal section; belongs to the DHPS family. In the N-terminal section; belongs to the HPPK family. It depends on Mg(2+) as a cofactor.

The enzyme catalyses 6-hydroxymethyl-7,8-dihydropterin + ATP = (7,8-dihydropterin-6-yl)methyl diphosphate + AMP + H(+). The catalysed reaction is (7,8-dihydropterin-6-yl)methyl diphosphate + 4-aminobenzoate = 7,8-dihydropteroate + diphosphate. It participates in cofactor biosynthesis; tetrahydrofolate biosynthesis; 2-amino-4-hydroxy-6-hydroxymethyl-7,8-dihydropteridine diphosphate from 7,8-dihydroneopterin triphosphate: step 4/4. It functions in the pathway cofactor biosynthesis; tetrahydrofolate biosynthesis; 7,8-dihydrofolate from 2-amino-4-hydroxy-6-hydroxymethyl-7,8-dihydropteridine diphosphate and 4-aminobenzoate: step 1/2. The polypeptide is Folate synthesis bifunctional protein (folKP) (Chlamydia trachomatis serovar D (strain ATCC VR-885 / DSM 19411 / UW-3/Cx)).